The primary structure comprises 634 residues: Chaperone protein DnaK (634 aa).

At T197 the chain carries Phosphothreonine; by autocatalysis. Residues 515 to 528 (LHKEDDKKRKESVD) show a composition bias toward basic and acidic residues. 2 disordered regions span residues 515–536 (LHKE…ADAI) and 595–634 (YKAA…AEVE). A compositionally biased stretch (gly residues) spans 603–615 (NAGGTAGGNGNAG).

Belongs to the heat shock protein 70 family.

Acts as a chaperone. The polypeptide is Chaperone protein DnaK (Campylobacter hominis (strain ATCC BAA-381 / DSM 21671 / CCUG 45161 / LMG 19568 / NCTC 13146 / CH001A)).